We begin with the raw amino-acid sequence, 84 residues long: UPF0297 protein NT01CX_2279 (84 aa).

Belongs to the UPF0297 family.

This chain is UPF0297 protein NT01CX_2279, found in Clostridium novyi (strain NT).